Here is a 266-residue protein sequence, read N- to C-terminus: F-actin-capping protein subunit beta (266 aa).

This sequence belongs to the F-actin-capping protein beta subunit family. As to quaternary structure, component of the F-actin capping complex, composed of a heterodimer of an alpha and a beta subunit.

Its subcellular location is the cytoplasm. The protein resides in the cytoskeleton. It localises to the actin patch. F-actin-capping proteins bind in a Ca(2+)-independent manner to the fast growing ends of actin filaments (barbed end) thereby blocking the exchange of subunits at these ends. Unlike other capping proteins (such as gelsolin and severin), these proteins do not sever actin filaments. The sequence is that of F-actin-capping protein subunit beta (cap2) from Emericella nidulans (strain FGSC A4 / ATCC 38163 / CBS 112.46 / NRRL 194 / M139) (Aspergillus nidulans).